The chain runs to 347 residues: NADH-ubiquinone oxidoreductase chain 2 (347 aa).

11 helical membrane-spanning segments follow: residues 2–22, 25–45, 56–76, 96–116, 122–142, 149–169, 178–197, 202–219, 241–261, 278–298, and 326–346; these read SPYV…MTLI, HWLT…PLMT, AIKY…SAIF, FMMT…FWVP, IPLL…ISIF, LNMS…GWGG, ILAY…IMIY, ILNL…FMVL, MIII…TGFM, LAMM…RIIY, and IPTL…FITL.

Belongs to the complex I subunit 2 family.

The protein localises to the mitochondrion inner membrane. The catalysed reaction is a ubiquinone + NADH + 5 H(+)(in) = a ubiquinol + NAD(+) + 4 H(+)(out). Core subunit of the mitochondrial membrane respiratory chain NADH dehydrogenase (Complex I) that is believed to belong to the minimal assembly required for catalysis. Complex I functions in the transfer of electrons from NADH to the respiratory chain. The immediate electron acceptor for the enzyme is believed to be ubiquinone. The polypeptide is NADH-ubiquinone oxidoreductase chain 2 (MT-ND2) (Didelphis virginiana (North American opossum)).